The primary structure comprises 161 residues: Cytochrome c-type biogenesis protein CcmE (161 aa).

The Cytoplasmic portion of the chain corresponds to 1–8 (MNARRKKR). A helical; Signal-anchor for type II membrane protein membrane pass occupies residues 9–29 (LTLAVALIGGVAAIASLLLYA). The Periplasmic segment spans residues 30–161 (LNSNLNLFYT…DYNEQQKTSY (132 aa)). Residues H131 and Y135 each coordinate heme.

It belongs to the CcmE/CycJ family.

It localises to the cell inner membrane. Heme chaperone required for the biogenesis of c-type cytochromes. Transiently binds heme delivered by CcmC and transfers the heme to apo-cytochromes in a process facilitated by CcmF and CcmH. The protein is Cytochrome c-type biogenesis protein CcmE of Shewanella sediminis (strain HAW-EB3).